Consider the following 349-residue polypeptide: Protein-arginine kinase (349 aa).

The region spanning 24-252 is the Phosphagen kinase C-terminal domain; sequence IVLSSRIRLA…SQIIEQERQA (229 aa). Residues 27-31, histidine 89, arginine 123, 174-178, and 205-210 contribute to the ATP site; these read SSRIR, RASVM, and RGIYGE. The short motif at 335–340 is the RDXXRA motif of the pArg binding pocket involved in allosteric regulation element; that stretch reads RDIKRA.

Belongs to the ATP:guanido phosphotransferase family.

The enzyme catalyses L-arginyl-[protein] + ATP = N(omega)-phospho-L-arginyl-[protein] + ADP + H(+). With respect to regulation, appears to be allosterically activated by the binding of pArg-containing polypeptides to the pArg-binding pocket localized in the C-terminal domain of McsB. Its function is as follows. Catalyzes the specific phosphorylation of arginine residues in proteins. The protein is Protein-arginine kinase of Halothermothrix orenii (strain H 168 / OCM 544 / DSM 9562).